Here is a 242-residue protein sequence, read N- to C-terminus: Proteasome subunit alpha (242 aa).

This sequence belongs to the peptidase T1A family. In terms of assembly, the 20S proteasome core is composed of 14 alpha and 14 beta subunits that assemble into four stacked heptameric rings, resulting in a barrel-shaped structure. The two inner rings, each composed of seven catalytic beta subunits, are sandwiched by two outer rings, each composed of seven alpha subunits. The catalytic chamber with the active sites is on the inside of the barrel. Has a gated structure, the ends of the cylinder being occluded by the N-termini of the alpha-subunits. Is capped by the proteasome-associated ATPase, ARC.

The protein localises to the cytoplasm. The protein operates within protein degradation; proteasomal Pup-dependent pathway. With respect to regulation, the formation of the proteasomal ATPase ARC-20S proteasome complex, likely via the docking of the C-termini of ARC into the intersubunit pockets in the alpha-rings, may trigger opening of the gate for substrate entry. Interconversion between the open-gate and close-gate conformations leads to a dynamic regulation of the 20S proteasome proteolysis activity. Component of the proteasome core, a large protease complex with broad specificity involved in protein degradation. The protein is Proteasome subunit alpha of Renibacterium salmoninarum (strain ATCC 33209 / DSM 20767 / JCM 11484 / NBRC 15589 / NCIMB 2235).